The sequence spans 553 residues: Glucose-6-phosphate isomerase (553 aa).

Residue glutamate 357 is the Proton donor of the active site. Active-site residues include histidine 388 and lysine 514. The tract at residues 527–553 (ADSPAAQSDSSTDALVRRYRTERGRTA) is disordered. The span at 541 to 553 (LVRRYRTERGRTA) shows a compositional bias: basic and acidic residues.

The protein belongs to the GPI family.

The protein resides in the cytoplasm. The catalysed reaction is alpha-D-glucose 6-phosphate = beta-D-fructose 6-phosphate. It participates in carbohydrate biosynthesis; gluconeogenesis. The protein operates within carbohydrate degradation; glycolysis; D-glyceraldehyde 3-phosphate and glycerone phosphate from D-glucose: step 2/4. Its function is as follows. Catalyzes the reversible isomerization of glucose-6-phosphate to fructose-6-phosphate. This is Glucose-6-phosphate isomerase from Mycolicibacterium vanbaalenii (strain DSM 7251 / JCM 13017 / BCRC 16820 / KCTC 9966 / NRRL B-24157 / PYR-1) (Mycobacterium vanbaalenii).